We begin with the raw amino-acid sequence, 126 residues long: Small ribosomal subunit protein uS13 (126 aa).

The interval 94 to 126 (RNLPVHGQRTHTNARTRKGPRRAIAGKKKAGKK) is disordered.

Belongs to the universal ribosomal protein uS13 family. In terms of assembly, part of the 30S ribosomal subunit. Forms a loose heterodimer with protein S19. Forms two bridges to the 50S subunit in the 70S ribosome.

Its function is as follows. Located at the top of the head of the 30S subunit, it contacts several helices of the 16S rRNA. In the 70S ribosome it contacts the 23S rRNA (bridge B1a) and protein L5 of the 50S subunit (bridge B1b), connecting the 2 subunits; these bridges are implicated in subunit movement. Contacts the tRNAs in the A and P-sites. The polypeptide is Small ribosomal subunit protein uS13 (Parafrankia sp. (strain EAN1pec)).